Here is a 176-residue protein sequence, read N- to C-terminus: Ribosome rescue factor SmrB (176 aa).

One can recognise a Smr domain in the interval 93–168 (LDLHGYRQSE…GDAALLVLID (76 aa)).

The protein belongs to the SmrB family. In terms of assembly, associates with collided ribosomes, but not with correctly translating polysomes.

Its function is as follows. Acts as a ribosome collision sensor. Detects stalled/collided disomes (pairs of ribosomes where the leading ribosome is stalled and a second ribosome has collided with it) and endonucleolytically cleaves mRNA at the 5' boundary of the stalled ribosome. Stalled/collided disomes form a new interface (primarily via the 30S subunits) that binds SmrB. Cleaved mRNA becomes available for tmRNA ligation, leading to ribosomal subunit dissociation and rescue of stalled ribosomes. This chain is Ribosome rescue factor SmrB, found in Shewanella putrefaciens (strain CN-32 / ATCC BAA-453).